The sequence spans 737 residues: Cellulose synthase-like protein E1 (737 aa).

2 consecutive transmembrane segments (helical) span residues 26 to 45 and 58 to 78; these read AVYR…VLYY and AAWL…VIAQ. Residues aspartate 146 and aspartate 451 contribute to the active site. 5 helical membrane-spanning segments follow: residues 528-548, 551-571, 654-674, 683-703, and 716-736; these read LWAA…LGLV, TPLF…VFCV, VIIA…LSQI, WNVF…NMPI, and IPTA…LVPI.

This sequence belongs to the glycosyltransferase 2 family. Plant cellulose synthase-like E subfamily.

It is found in the golgi apparatus membrane. In terms of biological role, thought to be a Golgi-localized beta-glycan synthase that polymerize the backbones of noncellulosic polysaccharides (hemicelluloses) of plant cell wall. The chain is Cellulose synthase-like protein E1 (CSLE1) from Oryza sativa subsp. japonica (Rice).